The primary structure comprises 22 residues: Brevinin-2LTa (22 aa).

In terms of tissue distribution, expressed by the skin glands.

The protein localises to the secreted. In terms of biological role, has antibacterial activity. This chain is Brevinin-2LTa, found in Rana latastei (Italian agile frog).